The following is a 350-amino-acid chain: Succinylglutamate desuccinylase (350 aa).

Zn(2+) is bound by residues His71, Glu74, and His169. Residue Glu233 is part of the active site.

It belongs to the AspA/AstE family. Succinylglutamate desuccinylase subfamily. It depends on Zn(2+) as a cofactor.

The enzyme catalyses N-succinyl-L-glutamate + H2O = L-glutamate + succinate. The protein operates within amino-acid degradation; L-arginine degradation via AST pathway; L-glutamate and succinate from L-arginine: step 5/5. In terms of biological role, transforms N(2)-succinylglutamate into succinate and glutamate. This chain is Succinylglutamate desuccinylase, found in Pseudoalteromonas atlantica (strain T6c / ATCC BAA-1087).